Reading from the N-terminus, the 117-residue chain is Large ribosomal subunit protein bL20 (117 aa).

It belongs to the bacterial ribosomal protein bL20 family.

Binds directly to 23S ribosomal RNA and is necessary for the in vitro assembly process of the 50S ribosomal subunit. It is not involved in the protein synthesizing functions of that subunit. This is Large ribosomal subunit protein bL20 from Geobacter sulfurreducens (strain ATCC 51573 / DSM 12127 / PCA).